We begin with the raw amino-acid sequence, 154 residues long: RxLR effector protein PexRD24 (154 aa).

The signal sequence occupies residues 1 to 22; sequence MHSSLLWLGAVVALLAVNNVTA. A RxLR-dEER motif is present at residues 53-67; it reads RSLRAVETSEDEEER. Residue lysine 138 is a short sequence motif, PP1c-binding motif.

It belongs to the RxLR effector family. In terms of assembly, interacts with the potato PP1c family proteins PP1c-1, PP1c-2 and PP1c-3.

The protein localises to the secreted. Its subcellular location is the host nucleus. The protein resides in the host nucleoplasm. It localises to the host nucleolus. In terms of biological role, effector that interacts with isoforms of host protein phosphatase type 1c (PP1c), mimicking a regulatory subunit and causing their re-localization within the host nucleus. The holoenzymes formed with PP1c isoforms act to promote late blight by attenuating jasmonic acid (JA)- and salicylic acid (SA)-mediated transcriptional responses of the host plant. The polypeptide is RxLR effector protein PexRD24 (Phytophthora infestans (strain T30-4) (Potato late blight agent)).